We begin with the raw amino-acid sequence, 439 residues long: FK506-binding protein 59 (439 aa).

PPIase FKBP-type domains follow at residues 32 to 120 (GCTV…LGWK) and 149 to 235 (GAFV…VDCG). TPR repeat units follow at residues 252–285 (AKVY…LPTT), 297–330 (VATH…DKNN), and 331–364 (VKAL…EPGN).

Interacts with inaD and trpl, and may be part of the inaD signaling complex. As to expression, expression in the embryo is limited to three tissues: lymph glands, Garland cells and oenocyte cells.

The catalysed reaction is [protein]-peptidylproline (omega=180) = [protein]-peptidylproline (omega=0). In terms of biological role, may have a role in phototransduction; inhibits or prevents Ca(2+) induced stimulation of the trpl ion channel. In Drosophila melanogaster (Fruit fly), this protein is FK506-binding protein 59.